The sequence spans 630 residues: 1-deoxy-D-xylulose-5-phosphate synthase (630 aa).

Residues His74 and 115–117 (GHA) each bind thiamine diphosphate. Asp146 contacts Mg(2+). Thiamine diphosphate is bound by residues 147–148 (AA), Asn175, Phe284, and Glu364. Asn175 is a Mg(2+) binding site.

This sequence belongs to the transketolase family. DXPS subfamily. As to quaternary structure, homodimer. The cofactor is Mg(2+). Thiamine diphosphate serves as cofactor.

The enzyme catalyses D-glyceraldehyde 3-phosphate + pyruvate + H(+) = 1-deoxy-D-xylulose 5-phosphate + CO2. The protein operates within metabolic intermediate biosynthesis; 1-deoxy-D-xylulose 5-phosphate biosynthesis; 1-deoxy-D-xylulose 5-phosphate from D-glyceraldehyde 3-phosphate and pyruvate: step 1/1. Functionally, catalyzes the acyloin condensation reaction between C atoms 2 and 3 of pyruvate and glyceraldehyde 3-phosphate to yield 1-deoxy-D-xylulose-5-phosphate (DXP). In Methylacidiphilum infernorum (isolate V4) (Methylokorus infernorum (strain V4)), this protein is 1-deoxy-D-xylulose-5-phosphate synthase.